The following is an 880-amino-acid chain: Valine--tRNA ligase (880 aa).

Residues 47-57 (PNITGKLHLGH) carry the 'HIGH' region motif. The 'KMSKS' region motif lies at 526–530 (KMSKS). Residue K529 coordinates ATP. Positions 810 to 845 (LLDLVDREKELERLNKEKTKLEGEILRVEKKLSNER) form a coiled coil.

It belongs to the class-I aminoacyl-tRNA synthetase family. ValS type 1 subfamily. Monomer.

The protein resides in the cytoplasm. It catalyses the reaction tRNA(Val) + L-valine + ATP = L-valyl-tRNA(Val) + AMP + diphosphate. Its function is as follows. Catalyzes the attachment of valine to tRNA(Val). As ValRS can inadvertently accommodate and process structurally similar amino acids such as threonine, to avoid such errors, it has a 'posttransfer' editing activity that hydrolyzes mischarged Thr-tRNA(Val) in a tRNA-dependent manner. This chain is Valine--tRNA ligase, found in Clostridium perfringens (strain 13 / Type A).